We begin with the raw amino-acid sequence, 446 residues long: Chromosomal replication initiator protein DnaA (446 aa).

Residues 1–81 (MENISDLWNS…AKLAIRFIIP (81 aa)) are domain I, interacts with DnaA modulators. Residues 81–109 (PQSQAEEDIDLPSVKQKHAHDESNHLPQS) are domain II. The domain III, AAA+ region stretch occupies residues 110–326 (MLNPKYTFDT…GALIRVVAYS (217 aa)). Positions 154, 156, 157, and 158 each coordinate ATP. The tract at residues 327 to 446 (SLINKDMNAD…HVEEVKDILK (120 aa)) is domain IV, binds dsDNA.

This sequence belongs to the DnaA family. As to quaternary structure, oligomerizes as a right-handed, spiral filament on DNA at oriC.

It localises to the cytoplasm. Plays an essential role in the initiation and regulation of chromosomal replication. ATP-DnaA binds to the origin of replication (oriC) to initiate formation of the DNA replication initiation complex once per cell cycle. Binds the DnaA box (a 9 base pair repeat at the origin) and separates the double-stranded (ds)DNA. Forms a right-handed helical filament on oriC DNA; dsDNA binds to the exterior of the filament while single-stranded (ss)DNA is stabiized in the filament's interior. The ATP-DnaA-oriC complex binds and stabilizes one strand of the AT-rich DNA unwinding element (DUE), permitting loading of DNA polymerase. After initiation quickly degrades to an ADP-DnaA complex that is not apt for DNA replication. Binds acidic phospholipids. This Bacillus mycoides (strain KBAB4) (Bacillus weihenstephanensis) protein is Chromosomal replication initiator protein DnaA.